A 446-amino-acid chain; its full sequence is Nitrate/nitrite binding protein NrtA (446 aa).

Residues 1–28 (MSNFSRSTRRKFMFTAGAAAIGGVVLHG) form the signal peptide. C29 carries N-palmitoyl cysteine lipidation. C29 carries S-diacylglycerol cysteine lipidation. Nitrate is bound by residues W102, Q155, H196, G240, and K269.

This sequence belongs to the CmpA/NrtA family. In terms of assembly, the complex is composed of two ATP-binding proteins (NrtC and NrtD), two transmembrane proteins (NrtB) and a solute-binding protein (NrtA).

It is found in the cell inner membrane. In terms of biological role, part of the ABC transporter complex NrtABCD involved in nitrate uptake. The complex is probably also involved in nitrite transport. NrtA is the substrate-binding protein. Binds nitrate. The sequence is that of Nitrate/nitrite binding protein NrtA from Synechocystis sp. (strain ATCC 27184 / PCC 6803 / Kazusa).